A 600-amino-acid polypeptide reads, in one-letter code: NADH-quinone oxidoreductase subunit C/D (600 aa).

Residues 1 to 190 (MIDLMPKKNT…EPFFLNEQKE (190 aa)) form an NADH dehydrogenase I subunit C region. Positions 214–600 (EFMFLNLGPN…IDFVMSDVDR (387 aa)) are NADH dehydrogenase I subunit D.

In the N-terminal section; belongs to the complex I 30 kDa subunit family. The protein in the C-terminal section; belongs to the complex I 49 kDa subunit family. NDH-1 is composed of 13 different subunits. Subunits NuoB, CD, E, F, and G constitute the peripheral sector of the complex.

The protein resides in the cell membrane. The catalysed reaction is a quinone + NADH + 5 H(+)(in) = a quinol + NAD(+) + 4 H(+)(out). In terms of biological role, NDH-1 shuttles electrons from NADH, via FMN and iron-sulfur (Fe-S) centers, to quinones in the respiratory chain. The immediate electron acceptor for the enzyme in this species is believed to be ubiquinone. Couples the redox reaction to proton translocation (for every two electrons transferred, four hydrogen ions are translocated across the cytoplasmic membrane), and thus conserves the redox energy in a proton gradient. This Buchnera aphidicola subsp. Acyrthosiphon pisum (strain 5A) protein is NADH-quinone oxidoreductase subunit C/D.